Reading from the N-terminus, the 224-residue chain is MEARMTGRRKVTRRDAMADAARAVGVACLGGFSLAALVRTASPVDARAIRPPGALPEQDFLAACVHCGLCVQACPYGTLSLAEWSDEAELGTPFFTPREVPCYMCKDVPCARACPTGALDRDIPSIRDADMGVAVLVGHETCLNYKGLNCSICVRVCPIRGDAISLEPQEIDGRRVMIPVVHSASCTGCGTCEKQCVLGHAAIRVLPRDLGLGGPGRNRAGRKA.

A signal peptide spans 1 to 41 (MEARMTGRRKVTRRDAMADAARAVGVACLGGFSLAALVRTA). 4 consecutive 4Fe-4S ferredoxin-type domains span residues 54 to 84 (ALPE…LAEW), 91 to 124 (GTPF…RDIP), 133 to 169 (VAVL…LEPQ), and 177 to 208 (MIPV…VLPR). [4Fe-4S] cluster-binding residues include C64, C67, C70, C74, C102, C105, C110, C114, C142, C150, C153, C157, C186, C189, C192, and C196.

The protein operates within one-carbon metabolism; methylamine degradation. Its function is as follows. Involved in electron transfer. The sequence is that of Methylamine utilization ferredoxin-type protein MauM (mauM) from Paracoccus denitrificans (strain Pd 1222).